Here is a 467-residue protein sequence, read N- to C-terminus: Serine/threonine-protein kinase US3 homolog (467 aa).

The interval 64–155 is disordered; sequence GPEVAPPART…PAGGVTREEA (92 aa). The segment covering 99–111 has biased composition (basic and acidic residues); sequence NERRAATGDEKES. Residues 117-144 show a composition bias toward acidic residues; the sequence is NESESESESESESESGADDGDWDDDDDA. The Protein kinase domain occupies 164 to 462; that stretch reads FRIIRRLTPG…AAELLEHPVF (299 aa). Residues 170-178 and lysine 194 contribute to the ATP site; that span reads LTPGSEGRV. Catalysis depends on aspartate 279, which acts as the Proton acceptor.

This sequence belongs to the protein kinase superfamily. Ser/Thr protein kinase family. Post-translationally, phosphorylated by UL13 homolog; this phosphorylation regulates subsequent phosphorylation of UL31 and UL34 homologs by US3. Autophosphorylated.

It is found in the host cytoplasm. The protein localises to the host nucleus. The catalysed reaction is L-seryl-[protein] + ATP = O-phospho-L-seryl-[protein] + ADP + H(+). The enzyme catalyses L-threonyl-[protein] + ATP = O-phospho-L-threonyl-[protein] + ADP + H(+). In terms of biological role, multifunctional serine/threonine kinase that plays a role in several processes including egress of virus particles from the nucleus, modulation of the actin cytoskeleton and inhibition of apoptosis. Phosphorylates UL31 and UL34 homologs, two critical regulators of capsid budding from nucleus to endoplasmic reticulum, thereby facilitating virion egress. Modulates and redistributes host components of the nuclear envelope, including LMNA, emerin/EMD and the nuclear matrix protein MATR3. Phosphorylates envelope glycoprotein B (gB), probably to direct it to the cell surface. Promotes virus intracellular spread by restructuring host cell cytoskeleton. Blocks host apoptosis to extend cell survival and allow efficient viral replication. Promotes viral gene expression by phosphorylating host HDAC2 to reduce viral genome silencing. This Bos taurus (Bovine) protein is Serine/threonine-protein kinase US3 homolog.